A 231-amino-acid chain; its full sequence is Phosphatidylserine decarboxylase proenzyme (231 aa).

The active-site Schiff-base intermediate with substrate; via pyruvic acid is serine 188. Residue serine 188 is modified to Pyruvic acid (Ser); by autocatalysis.

This sequence belongs to the phosphatidylserine decarboxylase family. PSD-A subfamily. Heterodimer of a large membrane-associated beta subunit and a small pyruvoyl-containing alpha subunit. Requires pyruvate as cofactor. Is synthesized initially as an inactive proenzyme. Formation of the active enzyme involves a self-maturation process in which the active site pyruvoyl group is generated from an internal serine residue via an autocatalytic post-translational modification. Two non-identical subunits are generated from the proenzyme in this reaction, and the pyruvate is formed at the N-terminus of the alpha chain, which is derived from the carboxyl end of the proenzyme. The post-translation cleavage follows an unusual pathway, termed non-hydrolytic serinolysis, in which the side chain hydroxyl group of the serine supplies its oxygen atom to form the C-terminus of the beta chain, while the remainder of the serine residue undergoes an oxidative deamination to produce ammonia and the pyruvoyl prosthetic group on the alpha chain.

It localises to the cell membrane. It catalyses the reaction a 1,2-diacyl-sn-glycero-3-phospho-L-serine + H(+) = a 1,2-diacyl-sn-glycero-3-phosphoethanolamine + CO2. It functions in the pathway phospholipid metabolism; phosphatidylethanolamine biosynthesis; phosphatidylethanolamine from CDP-diacylglycerol: step 2/2. Functionally, catalyzes the formation of phosphatidylethanolamine (PtdEtn) from phosphatidylserine (PtdSer). This is Phosphatidylserine decarboxylase proenzyme from Rickettsia africae (strain ESF-5).